Here is a 59-residue protein sequence, read N- to C-terminus: Large ribosomal subunit protein uL30 (59 aa).

It belongs to the universal ribosomal protein uL30 family. Part of the 50S ribosomal subunit.

The polypeptide is Large ribosomal subunit protein uL30 (Desulfatibacillum aliphaticivorans).